The primary structure comprises 799 residues: Cadherin-8 (799 aa).

The first 29 residues, 1–29 (MPERLAEMLLDLWTPLIILWITLPPCIYM), serve as a signal peptide directing secretion. Residues 30-61 (APMNQSQVLMSGSPLELNSLGEEQRILNRSKR) constitute a propeptide that is removed on maturation. N33 and N57 each carry an N-linked (GlcNAc...) asparagine glycan. 5 consecutive Cadherin domains span residues 62-167 (GWVW…APEF), 168-276 (LNGP…PPKF), 277-391 (AQSL…PPVF), 392-494 (SSPT…DNAP), and 495-616 (EFAS…YVLP). The Extracellular segment spans residues 62 to 621 (GWVWNQMFVL…AYVLPIGLSM (560 aa)). An N-linked (GlcNAc...) asparagine glycan is attached at N188. N-linked (GlcNAc...) asparagine glycans are attached at residues N463, N473, and N544. The helical transmembrane segment at 622-642 (GALIAILACIILLLVIVVLFV) threads the bilayer. Residues 643-799 (TLRRHKNEPL…YSVGESDKET (157 aa)) are Cytoplasmic-facing. S795 bears the Phosphoserine mark.

In terms of tissue distribution, mainly expressed in brain. Found in certain nerve cell lines, such as retinoblasts, glioma cells and neuroblasts.

It localises to the cell membrane. Its function is as follows. Cadherins are calcium-dependent cell adhesion proteins. They preferentially interact with themselves in a homophilic manner in connecting cells; cadherins may thus contribute to the sorting of heterogeneous cell types. The polypeptide is Cadherin-8 (CDH8) (Homo sapiens (Human)).